Here is a 284-residue protein sequence, read N- to C-terminus: 4-diphosphocytidyl-2-C-methyl-D-erythritol kinase (284 aa).

The active site involves Lys9. 90–100 (PLVSGLGGDSS) lines the ATP pocket. The active site involves Asp132.

Belongs to the GHMP kinase family. IspE subfamily.

The catalysed reaction is 4-CDP-2-C-methyl-D-erythritol + ATP = 4-CDP-2-C-methyl-D-erythritol 2-phosphate + ADP + H(+). Its pathway is isoprenoid biosynthesis; isopentenyl diphosphate biosynthesis via DXP pathway; isopentenyl diphosphate from 1-deoxy-D-xylulose 5-phosphate: step 3/6. Its function is as follows. Catalyzes the phosphorylation of the position 2 hydroxy group of 4-diphosphocytidyl-2C-methyl-D-erythritol. The chain is 4-diphosphocytidyl-2-C-methyl-D-erythritol kinase from Dehalococcoides mccartyi (strain ATCC BAA-2100 / JCM 16839 / KCTC 5957 / BAV1).